The chain runs to 354 residues: UDP-N-acetylglucosamine--N-acetylmuramyl-(pentapeptide) pyrophosphoryl-undecaprenol N-acetylglucosamine transferase (354 aa).

UDP-N-acetyl-alpha-D-glucosamine-binding positions include 15-17 (TGG), asparagine 127, arginine 163, serine 191, isoleucine 244, 263-268 (ALTVSE), and glutamine 288.

Belongs to the glycosyltransferase 28 family. MurG subfamily.

It localises to the cell inner membrane. It carries out the reaction di-trans,octa-cis-undecaprenyl diphospho-N-acetyl-alpha-D-muramoyl-L-alanyl-D-glutamyl-meso-2,6-diaminopimeloyl-D-alanyl-D-alanine + UDP-N-acetyl-alpha-D-glucosamine = di-trans,octa-cis-undecaprenyl diphospho-[N-acetyl-alpha-D-glucosaminyl-(1-&gt;4)]-N-acetyl-alpha-D-muramoyl-L-alanyl-D-glutamyl-meso-2,6-diaminopimeloyl-D-alanyl-D-alanine + UDP + H(+). The protein operates within cell wall biogenesis; peptidoglycan biosynthesis. In terms of biological role, cell wall formation. Catalyzes the transfer of a GlcNAc subunit on undecaprenyl-pyrophosphoryl-MurNAc-pentapeptide (lipid intermediate I) to form undecaprenyl-pyrophosphoryl-MurNAc-(pentapeptide)GlcNAc (lipid intermediate II). The protein is UDP-N-acetylglucosamine--N-acetylmuramyl-(pentapeptide) pyrophosphoryl-undecaprenol N-acetylglucosamine transferase of Vibrio cholerae serotype O1 (strain ATCC 39315 / El Tor Inaba N16961).